A 421-amino-acid chain; its full sequence is Nuclear envelope integral membrane protein 2 (421 aa).

Residues 1–22 (MLPRLWWLVLWLQPLATLPASA) form the signal peptide. A run of 6 helical transmembrane segments spans residues 64 to 84 (YMWS…IVYI), 147 to 167 (NIVD…FLYA), 175 to 195 (VFYY…FVLL), 206 to 226 (TFGA…CQLM), 238 to 258 (MYIL…CYSH), and 281 to 301 (LVYT…VLLF).

This sequence belongs to the NEMP family. As to expression, in the ovary, highly expressed in somatic cells.

The protein resides in the nucleus inner membrane. The sequence is that of Nuclear envelope integral membrane protein 2 (Nemp2) from Mus musculus (Mouse).